A 480-amino-acid polypeptide reads, in one-letter code: Iroquois-class homeodomain protein IRX-1 (480 aa).

A DNA-binding region (homeobox; TALE-type) is located at residues 125 to 188 (YGDPGRPKNA…ANARRRLKKE (64 aa)). Disordered stretches follow at residues 190-268 (KVTW…QGSP), 280-354 (SPLG…PLQH), and 401-480 (PHGP…LPSA). Over residues 210 to 228 (TEGDPEKAEDDEEIDLESI) the composition is skewed to acidic residues. The segment covering 229–239 (DIDKIDEHDGD) has biased composition (basic and acidic residues). Ser241 is modified (phosphoserine). Composition is skewed to low complexity over residues 252 to 262 (PHAPAAPSALA) and 340 to 351 (HPGAHGPSAGAP). Residues 404 to 417 (PHLPAPPPPQPPVA) are compositionally biased toward pro residues.

Belongs to the TALE/IRO homeobox family.

It localises to the nucleus. The polypeptide is Iroquois-class homeodomain protein IRX-1 (IRX1) (Homo sapiens (Human)).